We begin with the raw amino-acid sequence, 92 residues long: Small ribosomal subunit protein uS19 (92 aa).

Belongs to the universal ribosomal protein uS19 family. In terms of assembly, part of the 30S ribosomal subunit.

In terms of biological role, protein S19 forms a complex with S13 that binds strongly to the 16S ribosomal RNA. The sequence is that of Small ribosomal subunit protein uS19 (rpsS) from Bacillus subtilis (strain 168).